We begin with the raw amino-acid sequence, 68 residues long: Pleurocidin (68 aa).

The first 22 residues, 1-22 (MKFTATFLMIAIFVLMVEPGEC), serve as a signal peptide directing secretion. A propeptide spanning residues 48-68 (GDKQELNKRAVDEDPNVIVFE) is cleaved from the precursor.

This sequence belongs to the pleurocidin family. As to expression, goblet cells.

It localises to the secreted. In terms of biological role, antimicrobial peptide with potent activity against Gram-positive and Gram-negative bacteria. Activity against E.coli and B.subtilis. Weaker activity against L.mucor, s.marcescens and P.aeruginosa. May play a role in innate host defense. This chain is Pleurocidin (ple2), found in Pseudopleuronectes americanus (Winter flounder).